Here is a 354-residue protein sequence, read N- to C-terminus: Uroporphyrinogen decarboxylase (354 aa).

Substrate is bound by residues 27–31 (RQAGR), D77, Y154, T209, and H327.

This sequence belongs to the uroporphyrinogen decarboxylase family. Homodimer.

It localises to the cytoplasm. The enzyme catalyses uroporphyrinogen III + 4 H(+) = coproporphyrinogen III + 4 CO2. It participates in porphyrin-containing compound metabolism; protoporphyrin-IX biosynthesis; coproporphyrinogen-III from 5-aminolevulinate: step 4/4. Its function is as follows. Catalyzes the decarboxylation of four acetate groups of uroporphyrinogen-III to yield coproporphyrinogen-III. The sequence is that of Uroporphyrinogen decarboxylase from Shigella dysenteriae serotype 1 (strain Sd197).